The sequence spans 357 residues: N-acetyl-gamma-glutamyl-phosphate reductase (357 aa).

Cys-151 is an active-site residue.

The protein belongs to the NAGSA dehydrogenase family. Type 1 subfamily.

It localises to the cytoplasm. The enzyme catalyses N-acetyl-L-glutamate 5-semialdehyde + phosphate + NADP(+) = N-acetyl-L-glutamyl 5-phosphate + NADPH + H(+). It participates in amino-acid biosynthesis; L-arginine biosynthesis; N(2)-acetyl-L-ornithine from L-glutamate: step 3/4. Functionally, catalyzes the NADPH-dependent reduction of N-acetyl-5-glutamyl phosphate to yield N-acetyl-L-glutamate 5-semialdehyde. This Corynebacterium kroppenstedtii (strain DSM 44385 / JCM 11950 / CIP 105744 / CCUG 35717) protein is N-acetyl-gamma-glutamyl-phosphate reductase.